The chain runs to 529 residues: Protein PAT1 homolog 2 (529 aa).

A disordered region spans residues 153–183; it reads QILQQQQRWRRRRSPTARSVPAQKPWSREPA.

It belongs to the PAT1 family. As to quaternary structure, interacts with LSM1.

The protein resides in the cytoplasm. It localises to the nucleus. Its function is as follows. RNA-binding protein that acts as a translational repressor. This Mus musculus (Mouse) protein is Protein PAT1 homolog 2 (Patl2).